Reading from the N-terminus, the 446-residue chain is Nuclear envelope morphology protein 1 (446 aa).

The interval 53-80 is disordered; the sequence is VDQQYDHSSSHLKESDQNQERKNSVPKK. Residues 56–75 show a composition bias toward basic and acidic residues; the sequence is QYDHSSSHLKESDQNQERKN. Residues 87–103 traverse the membrane as a helical segment; sequence ILIEKIASILWALLLFL. The disordered stretch occupies residues 132–168; the sequence is HTDKRNRGSNASENELPVSSSNINDSSEKTNPKNCNL. Residues 139-156 are compositionally biased toward polar residues; it reads GSNASENELPVSSSNIND. In terms of domain architecture, FCP1 homology spans 247–424; that stretch reads NTQKKKKLVI…LNLLPFLEAM (178 aa).

Belongs to the Dullard family. In terms of assembly, component of the NEM1-SPO7 complex.

The protein resides in the endoplasmic reticulum membrane. It is found in the nucleus membrane. It catalyses the reaction O-phospho-L-seryl-[protein] + H2O = L-seryl-[protein] + phosphate. It carries out the reaction O-phospho-L-threonyl-[protein] + H2O = L-threonyl-[protein] + phosphate. Catalytic component of the NEM1-SPO7 complex which acts as a phosphatase and dephosphorylates the phosphatidic acid phosphohydrolase PAH1. Essential for the formation of a spherical nucleus and meiotic division. The NEM1-SPOo7 protein phosphatase is required for efficient mitophagy under prolonged respiration, as well as for reticulophagy and pexophagy. The sequence is that of Nuclear envelope morphology protein 1 (NEM1) from Saccharomyces cerevisiae (strain ATCC 204508 / S288c) (Baker's yeast).